A 327-amino-acid polypeptide reads, in one-letter code: Cysteine synthase (327 aa).

At Lys-65 the chain carries N6-(pyridoxal phosphate)lysine. Residues Asn-95, 200-204 (GTGGT), and Ser-282 each bind pyridoxal 5'-phosphate.

The protein belongs to the cysteine synthase/cystathionine beta-synthase family. Requires pyridoxal 5'-phosphate as cofactor.

It carries out the reaction O-acetyl-L-serine + hydrogen sulfide = L-cysteine + acetate. The protein operates within amino-acid biosynthesis; L-cysteine biosynthesis; L-cysteine from L-serine: step 2/2. The chain is Cysteine synthase (cysM) from Aquifex aeolicus (strain VF5).